A 149-amino-acid chain; its full sequence is SsrA-binding protein (149 aa).

The disordered stretch occupies residues 121–149 (GKKQHDKRADELDKDSKREAQRAMKERQR). The segment covering 127–149 (KRADELDKDSKREAQRAMKERQR) has biased composition (basic and acidic residues).

The protein belongs to the SmpB family.

The protein resides in the cytoplasm. In terms of biological role, required for rescue of stalled ribosomes mediated by trans-translation. Binds to transfer-messenger RNA (tmRNA), required for stable association of tmRNA with ribosomes. tmRNA and SmpB together mimic tRNA shape, replacing the anticodon stem-loop with SmpB. tmRNA is encoded by the ssrA gene; the 2 termini fold to resemble tRNA(Ala) and it encodes a 'tag peptide', a short internal open reading frame. During trans-translation Ala-aminoacylated tmRNA acts like a tRNA, entering the A-site of stalled ribosomes, displacing the stalled mRNA. The ribosome then switches to translate the ORF on the tmRNA; the nascent peptide is terminated with the 'tag peptide' encoded by the tmRNA and targeted for degradation. The ribosome is freed to recommence translation, which seems to be the essential function of trans-translation. This Dechloromonas aromatica (strain RCB) protein is SsrA-binding protein.